The following is a 209-amino-acid chain: FAS-associated death domain protein (209 aa).

The region spanning 3 to 81 (PFLVLLHSVS…RKDLLLRLDD (79 aa)) is the DED domain. Positions 97-181 (LRAAMEIICD…VVADLIEEDQ (85 aa)) constitute a Death domain. Over residues 187-200 (QSGSANPGSFTAWD) the composition is skewed to polar residues. A disordered region spans residues 187 to 209 (QSGSANPGSFTAWDSGSAAPGAS).

Can self-associate. Component of the AIM2 PANoptosome complex, a multiprotein complex that drives inflammatory cell death (PANoptosis). Component of the death-induced signaling complex (DISC) composed of cell surface receptor FAS/CD95 or TNFRSF1A, adapter protein FADD and the CASP8 protease; recruitment of CASP8 to the complex is required for processing of CASP8 into the p18 and p10 subunits. Interacts (via death domain) with FAS (via death domain). Interacts directly (via DED domain) with NOL3 (via CARD domain); inhibits death-inducing signaling complex (DISC) assembly by inhibiting the increase in FAS-FADD binding induced by FAS activation. Interacts with CFLAR, PEA15 and MBD4. When phosphorylated, part of a complex containing HIPK3 and FAS. May interact with MAVS/IPS1. Interacts with MOCV v-CFLAR protein and PIDD1. Interacts with RIPK1 and TRADD. Interacts with stimulated TNFRSF10B. Interacts with DDX24. Post-translationally, phosphorylated.

Its subcellular location is the cytoplasm. Apoptotic adapter molecule that recruits caspases CASP8 or CASP10 to the activated FAS/CD95 or TNFRSF1A/TNFR-1 receptors. The resulting aggregate called the death-inducing signaling complex (DISC) performs CASP8 proteolytic activation. Active CASP8 initiates the subsequent cascade of caspases mediating apoptosis. Involved in interferon-mediated antiviral immune response, playing a role in the positive regulation of interferon signaling. In Bos taurus (Bovine), this protein is FAS-associated death domain protein.